The primary structure comprises 220 residues: Cell surface glycolipoprotein MPB83 (220 aa).

An N-terminal signal peptide occupies residues 1–24; that stretch reads MINVQAKPAAAASLAAIAIAFLAG. Cys25 carries N-palmitoyl cysteine lipidation. Cys25 carries S-diacylglycerol cysteine lipidation. O-linked (Man...) threonine glycosylation is found at Thr48 and Thr49. Residues 83-215 enclose the FAS1 domain; it reads QDPVATAASN…ATVYMIDTVL (133 aa).

In terms of assembly, interacts with host (human) TLR2. Post-translationally, O-glycosylated. Contains 0-3 mannose residues attached to residues 48-49 in various configurations; the dominant glycoform is Thr-48(Man)/Thr-49(Man2) with an unusual Man(1-&gt;3)Man linkage, but Thr48(Man3)/Thr49(Man0) through to Thr48(Man0/)Thr49(Man3) are also seen. In terms of processing, when isolated from culture filtrate runs as 25 and 23 kDa proteins; the larger protein is much less abundant, mostly associated with the cell and starts at residue 28, the shorter is more abundant and starts at residue 48.

The protein resides in the cell membrane. The protein localises to the secreted. Its subcellular location is the cell wall. Induces expression of human (host) matrix metalloproteinase-9 (MMP9) in a TLR1/TLR2-dependent fashion; the acylated 20 first mature residues (residues 25-40) induce the most expression, but whole recombinant protein (non-acylated and non-glycosylated), and mannosylated but not acylated protein (residues 26-220) also induce expression. The polypeptide is Cell surface glycolipoprotein MPB83 (mpb83) (Mycobacterium bovis (strain ATCC BAA-935 / AF2122/97)).